The sequence spans 451 residues: MARKYFGTDGVRGRVGELPITPEFVMRLGYAAGVTLVAREHLPAGERPAILIGKDTRVSGYMLEAALQAGFAAAGVDVLLAGPIPTPAVAYLTRALRLQAGVVISASHNPFYDNGIKFFSAGGAKLPDAVEAEIEERIGQPMGCAESARLGRARRIGDAAGRYIEFCKSSFPNELDLRGLRIALDCAHGAAYHIAPNVFHELGAEVISVGVDPNGLNINDGVGATRPENLRQAVLSHGADLGIALDGDGDRLIMVDRQGEIYDGDKLLYVIASARAAEGRLDGVVGTLMSNLGFEHALERRGVAFARAKVGDRYVLEMLHERGWKIGGENSGHIICLDCHTTGDGIISALQVLAALKHREMSLSEACKDLVFYPQRLINVRLPAGFDWKADARIAQTAADAERTLGDTGRVLLRPSGTEPLLRVMVEGRDEQLVESLARGIAGAVELAVAG.

Residue S107 is the Phosphoserine intermediate of the active site. Positions 107, 246, 248, and 250 each coordinate Mg(2+). The residue at position 107 (S107) is a Phosphoserine.

The protein belongs to the phosphohexose mutase family. Mg(2+) is required as a cofactor. Activated by phosphorylation.

It carries out the reaction alpha-D-glucosamine 1-phosphate = D-glucosamine 6-phosphate. Functionally, catalyzes the conversion of glucosamine-6-phosphate to glucosamine-1-phosphate. The sequence is that of Phosphoglucosamine mutase from Azoarcus sp. (strain BH72).